The chain runs to 663 residues: UvrABC system protein B (663 aa).

The segment covering 1–10 (MIDKRDDKPF) has biased composition (basic and acidic residues). The interval 1–23 (MIDKRDDKPFKLKSKYKPSGDQP) is disordered. The region spanning 31–271 (DNIEGGEKAQ…EQSIAKIQAE (241 aa)) is the Helicase ATP-binding domain. Position 44 to 51 (44 to 51 (GATGTGKT)) interacts with ATP. A Beta-hairpin motif is present at residues 97–120 (YYDYYQPEAYVPSSDTYIEKDSSV). Residues 435 to 601 (QMDDLLGEIN…TIKKDIRGLI (167 aa)) form the Helicase C-terminal domain. The UVR domain occupies 627-662 (KEAINALQKQMQEAAELLDFELAAQMRDLILELKLM).

This sequence belongs to the UvrB family. Forms a heterotetramer with UvrA during the search for lesions. Interacts with UvrC in an incision complex.

It localises to the cytoplasm. In terms of biological role, the UvrABC repair system catalyzes the recognition and processing of DNA lesions. A damage recognition complex composed of 2 UvrA and 2 UvrB subunits scans DNA for abnormalities. Upon binding of the UvrA(2)B(2) complex to a putative damaged site, the DNA wraps around one UvrB monomer. DNA wrap is dependent on ATP binding by UvrB and probably causes local melting of the DNA helix, facilitating insertion of UvrB beta-hairpin between the DNA strands. Then UvrB probes one DNA strand for the presence of a lesion. If a lesion is found the UvrA subunits dissociate and the UvrB-DNA preincision complex is formed. This complex is subsequently bound by UvrC and the second UvrB is released. If no lesion is found, the DNA wraps around the other UvrB subunit that will check the other stand for damage. This is UvrABC system protein B from Streptococcus pyogenes serotype M2 (strain MGAS10270).